Here is a 202-residue protein sequence, read N- to C-terminus: MENLQVNQREKKTRHSSRQCRRKGLVPGVIYGKGINNFLFEIGELELNHALSVTGEHGLLSINSQEGSLNTLIKEVQRDPVTRRVLHIDLEKVEGNEEIETAVPINYVGEEYINKLDAVLQKNLDSIKVKCSPSNIPKGVNLNVGRAKPGDQFKIADVEFGNEITVVDDLNSIVASVSYDQKIITQEVVDQEVAENRAKKES.

The protein belongs to the bacterial ribosomal protein bL25 family. CTC subfamily. In terms of assembly, part of the 50S ribosomal subunit; part of the 5S rRNA/L5/L18/L25 subcomplex. Contacts the 5S rRNA. Binds to the 5S rRNA independently of L5 and L18.

Its function is as follows. This is one of the proteins that binds to the 5S RNA in the ribosome where it forms part of the central protuberance. In Clostridium perfringens (strain ATCC 13124 / DSM 756 / JCM 1290 / NCIMB 6125 / NCTC 8237 / Type A), this protein is Large ribosomal subunit protein bL25.